We begin with the raw amino-acid sequence, 608 residues long: Dolichyl-diphosphooligosaccharide--protein glycosyltransferase subunit 1 (608 aa).

A signal peptide spans 1 to 24 (MEAPAVCLLPLLLLLWAWAPAPGR). Residues 25-435 (ASPEALPLVN…VVHYTFNKVL (411 aa)) are Lumenal-facing. Lysine 188 is modified (N6-acetyllysine). N-linked (GlcNAc...) asparagine glycosylation is present at asparagine 300. Residues 436-456 (MLQEPLLVVAAFYILFFTVIV) traverse the membrane as a helical segment. The Cytoplasmic segment spans residues 457-607 (YVRLDFSITK…VTKIDHILDA (151 aa)). Position 539 is an N6-acetyllysine; alternate (lysine 539). Lysine 539 is covalently cross-linked (Glycyl lysine isopeptide (Lys-Gly) (interchain with G-Cter in SUMO2); alternate).

The protein belongs to the OST1 family. Component of the oligosaccharyltransferase (OST) complex. OST exists in two different complex forms which contain common core subunits RPN1, RPN2, OST48, OST4, DAD1 and TMEM258, either STT3A or STT3B as catalytic subunits, and form-specific accessory subunits. STT3A complex assembly occurs through the formation of 3 subcomplexes. Subcomplex 1 contains RPN1 and TMEM258, subcomplex 2 contains the STT3A-specific subunits STT3A, DC2/OSTC, and KCP2 as well as the core subunit OST4, and subcomplex 3 contains RPN2, DAD1, and OST48. The STT3A complex can form stable complexes with the Sec61 complex or with both the Sec61 and TRAP complexes. Interacts with TMEM35A/NACHO. Ubiquitinated by the ECS(ASB11) complex. In terms of processing, ufmylated by UFL1 in response to endoplasmic reticulum stress, promoting reticulophagy of endoplasmic reticulum sheets. Detected in liver (at protein level).

It is found in the endoplasmic reticulum membrane. Its pathway is protein modification; protein glycosylation. Functionally, subunit of the oligosaccharyl transferase (OST) complex that catalyzes the initial transfer of a defined glycan (Glc(3)Man(9)GlcNAc(2) in eukaryotes) from the lipid carrier dolichol-pyrophosphate to an asparagine residue within an Asn-X-Ser/Thr consensus motif in nascent polypeptide chains, the first step in protein N-glycosylation. N-glycosylation occurs cotranslationally and the complex associates with the Sec61 complex at the channel-forming translocon complex that mediates protein translocation across the endoplasmic reticulum (ER). All subunits are required for a maximal enzyme activity. This is Dolichyl-diphosphooligosaccharide--protein glycosyltransferase subunit 1 from Sus scrofa (Pig).